Here is a 244-residue protein sequence, read N- to C-terminus: tRNA (guanine-N(7)-)-methyltransferase (244 aa).

The disordered stretch occupies residues 1–24 (MTDSHVPHPESPAVEEGEERPHRR). S-adenosyl-L-methionine contacts are provided by Glu-74, Glu-99, Asp-126, and Asp-149. The active site involves Asp-149. Residues Lys-153, Asp-185, and 222-225 (TKFE) contribute to the substrate site.

Belongs to the class I-like SAM-binding methyltransferase superfamily. TrmB family.

The enzyme catalyses guanosine(46) in tRNA + S-adenosyl-L-methionine = N(7)-methylguanosine(46) in tRNA + S-adenosyl-L-homocysteine. The protein operates within tRNA modification; N(7)-methylguanine-tRNA biosynthesis. Its function is as follows. Catalyzes the formation of N(7)-methylguanine at position 46 (m7G46) in tRNA. The protein is tRNA (guanine-N(7)-)-methyltransferase of Pseudomonas syringae pv. syringae (strain B728a).